The following is a 136-amino-acid chain: Histone H3 (136 aa).

Residues 1-42 (MARTKQTARKSTGGKAPRKQIAAKAARKAAPSTGGVKKPHRY) form a disordered region. Lys5 is subject to N6,N6,N6-trimethyllysine; alternate. N6,N6-dimethyllysine; alternate is present on Lys5. An N6-methyllysine; alternate mark is found at Lys5 and Lys10. The residue at position 10 (Lys10) is an N6-acetyllysine; alternate. The residue at position 11 (Ser11) is a Phosphoserine. Lys15 carries the N6,N6-dimethyllysine; alternate modification. An N6-acetyllysine; alternate mark is found at Lys15, Lys19, Lys24, Lys28, and Lys37. Lys19, Lys24, Lys28, and Lys37 each carry N6-methyllysine; alternate. The segment covering 19-31 (KQIAAKAARKAAP) has biased composition (low complexity). N6,N6,N6-trimethyllysine; alternate is present on residues Lys28 and Lys37. An N6,N6-dimethyllysine; alternate mark is found at Lys28 and Lys37. 2 positions are modified to N6-acetyllysine: Lys57 and Lys65. N6,N6,N6-trimethyllysine; alternate is present on Lys80. Lys80 is modified (N6,N6-dimethyllysine; alternate). Lys80 carries the N6-methyllysine; alternate modification.

This sequence belongs to the histone H3 family. In terms of assembly, the nucleosome is a histone octamer containing two molecules each of H2A, H2B, H3 and H4 assembled in one H3-H4 heterotetramer and two H2A-H2B heterodimers. The octamer wraps approximately 147 bp of DNA. Phosphorylated to form H3S10ph. H3S10ph promotes subsequent H3K14ac formation and is required for transcriptional activation through TBP recruitment to the promoters. Post-translationally, mono-, di- and trimethylated by the COMPASS complex to form H3K4me1/2/3. H3K4me activates gene expression by regulating transcription elongation and plays a role in telomere length maintenance. H3K4me enrichment correlates with transcription levels, and occurs in a 5' to 3' gradient with H3K4me3 enrichment at the 5'-end of genes, shifting to H3K4me2 and then H3K4me1. Methylated by SET2 to form H3K36me. H3K36me represses gene expression. Methylated by DOT1 to form H3K79me. H3K79me is required for association of SIR proteins with telomeric regions and for telomeric silencing. The COMPASS-mediated formation of H3K4me2/3 and the DOT1-mediated formation of H3K79me require H2BK123ub1. In terms of processing, acetylation of histone H3 leads to transcriptional activation. H3K14ac formation by GCN5 is promoted by H3S10ph. H3K14ac can also be formed by ESA1. H3K56ac formation occurs predominantly in newly synthesized H3 molecules during G1, S and G2/M of the cell cycle and may be involved in DNA repair.

The protein resides in the nucleus. The protein localises to the chromosome. Its function is as follows. Core component of nucleosome. Nucleosomes wrap and compact DNA into chromatin, limiting DNA accessibility to the cellular machineries which require DNA as a template. Histones thereby play a central role in transcription regulation, DNA repair, DNA replication and chromosomal stability. DNA accessibility is regulated via a complex set of post-translational modifications of histones, also called histone code, and nucleosome remodeling. This is Histone H3 (HHT1) from Coccidioides immitis (strain RS) (Valley fever fungus).